The primary structure comprises 140 residues: ATP synthase epsilon chain (140 aa).

Belongs to the ATPase epsilon chain family. In terms of assembly, F-type ATPases have 2 components, CF(1) - the catalytic core - and CF(0) - the membrane proton channel. CF(1) has five subunits: alpha(3), beta(3), gamma(1), delta(1), epsilon(1). CF(0) has three main subunits: a, b and c.

Its subcellular location is the cell membrane. In terms of biological role, produces ATP from ADP in the presence of a proton gradient across the membrane. The polypeptide is ATP synthase epsilon chain (Dehalococcoides mccartyi (strain ATCC BAA-2100 / JCM 16839 / KCTC 5957 / BAV1)).